The following is a 632-amino-acid chain: Cyclic GMP-AMP synthase-like receptor 2 (632 aa).

Mg(2+) is bound by residues D71, D73, and D181. D295 contributes to the Mn(2+) binding site.

It belongs to the mab-21 family. The cofactor is Mg(2+). Mn(2+) serves as cofactor.

Nucleotidyltransferase that catalyzes the formation of some cyclic nucleotide and plays a key role in innate immunity. Directly binds some unknown ligand, activating the nucleotidyltransferase activity, leading to synthesis of a second messenger that binds to and activates Sting, thereby triggering the immune response via activation of the NF-kappa-B transcription factor. The polypeptide is Cyclic GMP-AMP synthase-like receptor 2 (Crassostrea virginica (Eastern oyster)).